The primary structure comprises 345 residues: Anthranilate phosphoribosyltransferase (345 aa).

5-phospho-alpha-D-ribose 1-diphosphate contacts are provided by residues Gly-88, 91-92 (GD), Thr-96, 98-101 (NIST), 116-124 (KHGNRSASG), and Ser-128. An anthranilate-binding site is contributed by Gly-88. Ser-100 lines the Mg(2+) pocket. Residue Asn-119 coordinates anthranilate. Arg-174 contributes to the anthranilate binding site. Positions 233 and 234 each coordinate Mg(2+).

This sequence belongs to the anthranilate phosphoribosyltransferase family. Homodimer. Mg(2+) serves as cofactor.

The catalysed reaction is N-(5-phospho-beta-D-ribosyl)anthranilate + diphosphate = 5-phospho-alpha-D-ribose 1-diphosphate + anthranilate. The protein operates within amino-acid biosynthesis; L-tryptophan biosynthesis; L-tryptophan from chorismate: step 2/5. Its function is as follows. Catalyzes the transfer of the phosphoribosyl group of 5-phosphorylribose-1-pyrophosphate (PRPP) to anthranilate to yield N-(5'-phosphoribosyl)-anthranilate (PRA). The chain is Anthranilate phosphoribosyltransferase from Prochlorococcus marinus (strain NATL1A).